Reading from the N-terminus, the 124-residue chain is Small ribosomal subunit protein uS12 (124 aa).

Position 89 is a 3-methylthioaspartic acid (Asp89).

It belongs to the universal ribosomal protein uS12 family. As to quaternary structure, part of the 30S ribosomal subunit. Contacts proteins S8 and S17. May interact with IF1 in the 30S initiation complex.

Functionally, with S4 and S5 plays an important role in translational accuracy. Interacts with and stabilizes bases of the 16S rRNA that are involved in tRNA selection in the A site and with the mRNA backbone. Located at the interface of the 30S and 50S subunits, it traverses the body of the 30S subunit contacting proteins on the other side and probably holding the rRNA structure together. The combined cluster of proteins S8, S12 and S17 appears to hold together the shoulder and platform of the 30S subunit. This is Small ribosomal subunit protein uS12 from Shewanella sediminis (strain HAW-EB3).